The sequence spans 352 residues: D-alanine--D-alanine ligase (352 aa).

The 210-residue stretch at 135 to 344 (KTVFAKAGLP…FPQLVDRLIE (210 aa)) folds into the ATP-grasp domain. 171–226 (EETLNYPCFVKPANLGSSVGIAKVRSRSELEKALDQAASYDRRIIVEAGVIAREVE) is an ATP binding site. D297, E311, and N313 together coordinate Mg(2+).

This sequence belongs to the D-alanine--D-alanine ligase family. It depends on Mg(2+) as a cofactor. Mn(2+) is required as a cofactor.

It localises to the cytoplasm. It catalyses the reaction 2 D-alanine + ATP = D-alanyl-D-alanine + ADP + phosphate + H(+). The protein operates within cell wall biogenesis; peptidoglycan biosynthesis. Its function is as follows. Cell wall formation. The protein is D-alanine--D-alanine ligase of Gloeothece citriformis (strain PCC 7424) (Cyanothece sp. (strain PCC 7424)).